The chain runs to 403 residues: Na(+)-translocating NADH-quinone reductase subunit B (403 aa).

The next 3 membrane-spanning stretches (helical) occupy residues Ile56–Gly76, Leu114–Val134, and Leu165–Ala185. Thr231 carries the FMN phosphoryl threonine modification. Helical transmembrane passes span Gly260–Met280, Ile287–Ser307, Met312–Phe332, Trp348–Phe368, and Gly371–Ala391.

This sequence belongs to the NqrB/RnfD family. In terms of assembly, composed of six subunits; NqrA, NqrB, NqrC, NqrD, NqrE and NqrF. FMN serves as cofactor.

The protein localises to the cell inner membrane. It catalyses the reaction a ubiquinone + n Na(+)(in) + NADH + H(+) = a ubiquinol + n Na(+)(out) + NAD(+). Its function is as follows. NQR complex catalyzes the reduction of ubiquinone-1 to ubiquinol by two successive reactions, coupled with the transport of Na(+) ions from the cytoplasm to the periplasm. NqrA to NqrE are probably involved in the second step, the conversion of ubisemiquinone to ubiquinol. In Pseudoalteromonas atlantica (strain T6c / ATCC BAA-1087), this protein is Na(+)-translocating NADH-quinone reductase subunit B.